The sequence spans 67 residues: Cold shock protein (67 aa).

Residues 4 to 64 (GTVKWFNAEK…GAKGPQATGV (61 aa)) form the CSD domain.

It localises to the cytoplasm. This Arthrobacter globiformis protein is Cold shock protein (csp).